The following is a 185-amino-acid chain: Fimbrial subunit type 1 (185 aa).

An N-terminal signal peptide occupies residues Met-1–Ala-22. Cysteines 46 and 86 form a disulfide.

This sequence belongs to the fimbrial protein family.

It localises to the fimbrium. The chain is Fimbrial subunit type 1 from Salmonella typhimurium.